The primary structure comprises 95 residues: Large ribosomal subunit protein bL25 (95 aa).

The protein belongs to the bacterial ribosomal protein bL25 family. As to quaternary structure, part of the 50S ribosomal subunit; part of the 5S rRNA/L5/L18/L25 subcomplex. Contacts the 5S rRNA. Binds to the 5S rRNA independently of L5 and L18.

Its function is as follows. This is one of the proteins that binds to the 5S RNA in the ribosome where it forms part of the central protuberance. The chain is Large ribosomal subunit protein bL25 from Buchnera aphidicola subsp. Acyrthosiphon pisum (strain 5A).